The chain runs to 367 residues: Spermidine/putrescine import ATP-binding protein PotA (367 aa).

Residues 10–240 (IEFKNVSLDY…PINHFVANFI (231 aa)) enclose the ABC transporter domain. 42-49 (GPSGSGKS) contributes to the ATP binding site.

Belongs to the ABC transporter superfamily. Spermidine/putrescine importer (TC 3.A.1.11.1) family. The complex is composed of two ATP-binding proteins (PotA), two transmembrane proteins (PotB and PotC) and a solute-binding protein (PotD).

The protein resides in the cell membrane. The catalysed reaction is ATP + H2O + polyamine-[polyamine-binding protein]Side 1 = ADP + phosphate + polyamineSide 2 + [polyamine-binding protein]Side 1.. Functionally, part of the ABC transporter complex PotABCD involved in spermidine/putrescine import. Responsible for energy coupling to the transport system. The polypeptide is Spermidine/putrescine import ATP-binding protein PotA (Oenococcus oeni (strain ATCC BAA-331 / PSU-1)).